Reading from the N-terminus, the 70-residue chain is Large ribosomal subunit protein bL31 (70 aa).

Zn(2+)-binding residues include Cys-16, Cys-18, Cys-37, and Cys-40.

It belongs to the bacterial ribosomal protein bL31 family. Type A subfamily. In terms of assembly, part of the 50S ribosomal subunit. Requires Zn(2+) as cofactor.

Binds the 23S rRNA. The protein is Large ribosomal subunit protein bL31 of Proteus mirabilis (strain HI4320).